Reading from the N-terminus, the 339-residue chain is UDP-3-O-acylglucosamine N-acyltransferase (339 aa).

The active-site Proton acceptor is His-248.

The protein belongs to the transferase hexapeptide repeat family. LpxD subfamily. In terms of assembly, homotrimer.

The enzyme catalyses a UDP-3-O-[(3R)-3-hydroxyacyl]-alpha-D-glucosamine + a (3R)-hydroxyacyl-[ACP] = a UDP-2-N,3-O-bis[(3R)-3-hydroxyacyl]-alpha-D-glucosamine + holo-[ACP] + H(+). It functions in the pathway bacterial outer membrane biogenesis; LPS lipid A biosynthesis. Its function is as follows. Catalyzes the N-acylation of UDP-3-O-acylglucosamine using 3-hydroxyacyl-ACP as the acyl donor. Is involved in the biosynthesis of lipid A, a phosphorylated glycolipid that anchors the lipopolysaccharide to the outer membrane of the cell. This chain is UDP-3-O-acylglucosamine N-acyltransferase, found in Caulobacter vibrioides (strain NA1000 / CB15N) (Caulobacter crescentus).